A 61-amino-acid polypeptide reads, in one-letter code: Small ribosomal subunit protein uS14 (61 aa).

C24, C27, C40, and C43 together coordinate Zn(2+).

Belongs to the universal ribosomal protein uS14 family. Zinc-binding uS14 subfamily. Part of the 30S ribosomal subunit. Contacts proteins S3 and S10. Zn(2+) serves as cofactor.

Binds 16S rRNA, required for the assembly of 30S particles and may also be responsible for determining the conformation of the 16S rRNA at the A site. In Mycoplasma capricolum subsp. capricolum (strain California kid / ATCC 27343 / NCTC 10154), this protein is Small ribosomal subunit protein uS14.